The primary structure comprises 37 residues: Large ribosomal subunit protein bL36c (37 aa).

The protein belongs to the bacterial ribosomal protein bL36 family.

The protein resides in the plastid. The protein localises to the chloroplast. This Acorus calamus (Sweet flag) protein is Large ribosomal subunit protein bL36c.